Consider the following 397-residue polypeptide: Succinate--CoA ligase [ADP-forming] subunit beta (397 aa).

The 246-residue stretch at 9–254 folds into the ATP-grasp domain; the sequence is KALLAQYGAP…ETEEDPKELA (246 aa). ATP contacts are provided by residues K46, 53–55, E109, S112, and E117; that span reads GRG. Mg(2+) is bound by residues N209 and D223. Substrate-binding positions include N274 and 331-333; that span reads GIM.

This sequence belongs to the succinate/malate CoA ligase beta subunit family. In terms of assembly, heterotetramer of two alpha and two beta subunits. It depends on Mg(2+) as a cofactor.

The enzyme catalyses succinate + ATP + CoA = succinyl-CoA + ADP + phosphate. It catalyses the reaction GTP + succinate + CoA = succinyl-CoA + GDP + phosphate. It participates in carbohydrate metabolism; tricarboxylic acid cycle; succinate from succinyl-CoA (ligase route): step 1/1. In terms of biological role, succinyl-CoA synthetase functions in the citric acid cycle (TCA), coupling the hydrolysis of succinyl-CoA to the synthesis of either ATP or GTP and thus represents the only step of substrate-level phosphorylation in the TCA. The beta subunit provides nucleotide specificity of the enzyme and binds the substrate succinate, while the binding sites for coenzyme A and phosphate are found in the alpha subunit. This Jannaschia sp. (strain CCS1) protein is Succinate--CoA ligase [ADP-forming] subunit beta.